The following is a 620-amino-acid chain: NADPH-dependent diflavin oxidoreductase 1 (620 aa).

The Flavodoxin-like domain maps to 6-168 (IAILYGSETG…VYSEFEKRVL (163 aa)). FMN contacts are provided by residues 12 to 17 (SETGTA), 59 to 62 (STTG), and 106 to 115 (LGDSSYSKFN). Residues 222–475 (SSVKYGTVVT…LLPAGKQDRP (254 aa)) enclose the FAD-binding FR-type domain. FAD contacts are provided by residues Arg-380, 410 to 413 (RFFS), and 442 to 445 (GLCT). NADP(+) is bound at residue 535-536 (SR). Trp-620 serves as a coordination point for FAD.

It belongs to the NADPH-dependent diflavin oxidoreductase NDOR1 family. The protein in the N-terminal section; belongs to the flavodoxin family. In the C-terminal section; belongs to the flavoprotein pyridine nucleotide cytochrome reductase family. As to quaternary structure, interacts with DRE2; as part of the cytosolic iron-sulfur (Fe-S) protein assembly (CIA) machinery. The cofactor is FAD. FMN is required as a cofactor.

It is found in the cytoplasm. The protein localises to the mitochondrion. The catalysed reaction is 2 oxidized [2Fe-2S]-[protein] + NADPH = 2 reduced [2Fe-2S]-[protein] + NADP(+) + H(+). NADPH-dependent reductase which is a central component of the cytosolic iron-sulfur (Fe-S) protein assembly (CIA) machinery. Transfers electrons from NADPH via its FAD and FMN prosthetic groups to the [2Fe-2S] cluster of DRE2, another key component of the CIA machinery. In turn, this reduced cluster provides electrons for assembly of cytosolic iron-sulfur cluster proteins. Positively controls H(2)O(2)-induced cell death. This chain is NADPH-dependent diflavin oxidoreductase 1, found in Eremothecium gossypii (strain ATCC 10895 / CBS 109.51 / FGSC 9923 / NRRL Y-1056) (Yeast).